The following is a 254-amino-acid chain: Protein orai-2 (254 aa).

4 helical membrane passes run 66–83 (TSALLSGFAMVAMVEVQL), 94–114 (LIAFSACTTVLVAVHLFALLI), 148–168 (LAWGFSTVLGILLFLAEVVLL), and 196–216 (AALVSTIIMVPVGLIFVVFTI).

Belongs to the Orai family. As to quaternary structure, oligomerizes in homomeric and heteromeric ORAI complexes. Native CRAC channels most likely consist of hexameric ORAI heteromers, implying that diverse ORAI1, ORAI2 and ORAI3 subunit combinations with distinct biophysical properties can operate in a cell-type specific way. Interacts with STIM1; this regulates channel activity. Interacts with CRACR2A/EFCAB4B.

It is found in the cell membrane. The catalysed reaction is Ca(2+)(in) = Ca(2+)(out). With respect to regulation, CRAC channels are regulated by fast Ca(2+)-dependent inactivation (FCDI), a mechanism that limits Ca(2+) influx and cell toxicity. ORAI2 channels display prominent FCDI. Inhibited by lanthanides such as Gd(3+) ions. Pore-forming subunit of inward rectifying Ca(2+) release-activated Ca(2+) (CRAC) channels. Assembles with ORAI1 and ORAI3 to form hexameric CRAC channels that mediate Ca(2+) influx upon depletion of endoplasmic reticulum Ca(2+) store and channel activation by Ca(2+) sensor STIM1, a process known as store-operated Ca(2+) entry (SOCE). Various pore subunit combinations may account for distinct CRAC channel spatiotemporal and cell-type specific dynamics. ORAI1 mainly contributes to the generation of Ca(2+) plateaus involved in sustained Ca(2+) entry and is dispensable for cytosolic Ca(2+) oscillations, whereas ORAI2 and ORAI3 generate oscillatory patterns. CRAC channels assemble in Ca(2+) signaling microdomains where Ca(2+) influx is coupled to calmodulin and calcineurin signaling and activation of NFAT transcription factors recruited to ORAI1 via AKAP5. CRAC channels are the main pathway for Ca(2+) influx in T cells and promote the immune response to pathogens by activating NFAT-dependent cytokine and chemokine transcription. This chain is Protein orai-2 (ORAI2), found in Homo sapiens (Human).